The sequence spans 317 residues: Methionyl-tRNA formyltransferase (317 aa).

Residue 110 to 113 (SLLP) participates in (6S)-5,6,7,8-tetrahydrofolate binding.

This sequence belongs to the Fmt family.

The enzyme catalyses L-methionyl-tRNA(fMet) + (6R)-10-formyltetrahydrofolate = N-formyl-L-methionyl-tRNA(fMet) + (6S)-5,6,7,8-tetrahydrofolate + H(+). Its function is as follows. Attaches a formyl group to the free amino group of methionyl-tRNA(fMet). The formyl group appears to play a dual role in the initiator identity of N-formylmethionyl-tRNA by promoting its recognition by IF2 and preventing the misappropriation of this tRNA by the elongation apparatus. The polypeptide is Methionyl-tRNA formyltransferase (Bacillus pumilus (strain SAFR-032)).